The sequence spans 584 residues: Dihydroxyacetone kinase 1 (584 aa).

S2 is modified (N-acetylserine). 2 positions are modified to phosphoserine: S2 and S5. The DhaK domain occupies 7–353 (EVTDPVNSSL…LNAFTNAPGW (347 aa)). Substrate contacts are provided by residues 51-54 (GSGH), K103, and D108. The active-site Tele-hemiaminal-histidine intermediate is the H220. S365 is subject to Phosphoserine. Residues 386 to 582 (DKFAEWMKSG…LCEFLKGVQS (197 aa)) enclose the DhaL domain. ATP contacts are provided by residues 415–418 (DGDC) and 459–460 (TS). Phosphoserine is present on S512. ATP is bound by residues 514–515 (TM) and 567–569 (DPG).

Belongs to the dihydroxyacetone kinase (DAK) family.

It catalyses the reaction dihydroxyacetone + ATP = dihydroxyacetone phosphate + ADP + H(+). The catalysed reaction is D-glyceraldehyde + ATP = D-glyceraldehyde 3-phosphate + ADP + H(+). The protein operates within polyol metabolism; glycerol fermentation; glycerone phosphate from glycerol (oxidative route): step 2/2. In terms of biological role, catalyzes both the phosphorylation of dihydroxyacetone and of glyceraldehyde. The chain is Dihydroxyacetone kinase 1 (DAK1) from Saccharomyces cerevisiae (strain ATCC 204508 / S288c) (Baker's yeast).